We begin with the raw amino-acid sequence, 1103 residues long: Centrosomal protein of 126 kDa (1103 aa).

Over residues 1–12 (MLAGRPGAQSAG) the composition is skewed to low complexity. Residues 1-36 (MLAGRPGAQSAGAGVGAGPPDAPGARDGGGRPRPGA) are disordered. Coiled coils occupy residues 43 to 116 (HLEK…FQRA) and 182 to 222 (QKHL…KLLE). Disordered stretches follow at residues 380–409 (NTAE…ESPT) and 723–812 (ESKA…PGQS). The segment covering 723–735 (ESKAPVHASDSKT) has biased composition (basic and acidic residues). The segment covering 736 to 748 (QKTKPQRGVKFTR) has biased composition (basic residues). Polar residues-rich tracts occupy residues 763–784 (RKPT…QTQG) and 798–812 (NIKS…PGQS).

Interacts with DCTN1.

It localises to the midbody. The protein resides in the cytoplasm. The protein localises to the cytoskeleton. It is found in the microtubule organizing center. Its subcellular location is the centrosome. It localises to the cilium basal body. Functionally, participate in cytokinesis. Necessary for microtubules and mitotic spindle organization. Involved in primary cilium formation. The sequence is that of Centrosomal protein of 126 kDa from Mus musculus (Mouse).